A 262-amino-acid chain; its full sequence is Probable carboxylesterase Culp3 (262 aa).

Residues 1 to 41 (MNNRPIRLLTSGRAGLGAGALITAVVLLIALGAVWTLVAFA) form the signal peptide. A disulfide bond links Cys44 and Cys114. The active-site Nucleophile is Ser125. Cys188 and Cys195 form a disulfide bridge. Residue Asp192 is part of the active site. The active-site Proton donor/acceptor is His206. The segment at 241 to 262 (LPGSVLQMPGTAAPAPESLHGR) is disordered.

It belongs to the cutinase family.

Its subcellular location is the secreted. The protein is Probable carboxylesterase Culp3 (cut3) of Mycobacterium tuberculosis (strain CDC 1551 / Oshkosh).